A 758-amino-acid chain; its full sequence is 5-methyltetrahydropteroyltriglutamate--homocysteine methyltransferase (758 aa).

Residues 17 to 20 (RELK) and Lys117 each bind 5-methyltetrahydropteroyltri-L-glutamate. Residues 434-436 (IGS) and Glu487 each bind L-homocysteine. L-methionine is bound by residues 434–436 (IGS) and Glu487. Residues 518–519 (RC) and Trp564 contribute to the 5-methyltetrahydropteroyltri-L-glutamate site. Residue Asp602 coordinates L-homocysteine. Asp602 is a binding site for L-methionine. Glu608 serves as a coordination point for 5-methyltetrahydropteroyltri-L-glutamate. The Zn(2+) site is built by His644, Cys646, and Glu668. The active-site Proton donor is the His697. Cys729 provides a ligand contact to Zn(2+).

It belongs to the vitamin-B12 independent methionine synthase family. Zn(2+) serves as cofactor.

It catalyses the reaction 5-methyltetrahydropteroyltri-L-glutamate + L-homocysteine = tetrahydropteroyltri-L-glutamate + L-methionine. Its pathway is amino-acid biosynthesis; L-methionine biosynthesis via de novo pathway; L-methionine from L-homocysteine (MetE route): step 1/1. Its function is as follows. Catalyzes the transfer of a methyl group from 5-methyltetrahydrofolate to homocysteine resulting in methionine formation. The polypeptide is 5-methyltetrahydropteroyltriglutamate--homocysteine methyltransferase (Sodalis glossinidius (strain morsitans)).